We begin with the raw amino-acid sequence, 520 residues long: Amine oxidase [flavin-containing] B (520 aa).

Ser2 is modified (N-acetylserine). The Cytoplasmic portion of the chain corresponds to 2–489; that stretch reads SGKCDVVVVG…TFLERHLPSV (488 aa). At Lys52 the chain carries N6-acetyllysine. At Cys397 the chain carries S-8alpha-FAD cysteine. The helical; Anchor for type IV membrane protein transmembrane segment at 490 to 516 threads the bilayer; it reads PGLLRLIGLTAIFSATALGVLAHKRGL. Residues 517-520 lie on the Mitochondrial intermembrane side of the membrane; it reads LVRV.

It belongs to the flavin monoamine oxidase family. Monomer, homo- or heterodimer (containing two subunits of similar size). Each subunit contains a covalently bound flavin. Enzymatically active as monomer. Requires FAD as cofactor.

It localises to the mitochondrion outer membrane. The catalysed reaction is a secondary aliphatic amine + O2 + H2O = a primary amine + an aldehyde + H2O2. The enzyme catalyses (R)-adrenaline + O2 + H2O = (R)-3,4-dihydroxymandelaldehyde + methylamine + H2O2. It catalyses the reaction a primary methyl amine + O2 + H2O = an aldehyde + H2O2 + NH4(+). It carries out the reaction benzylamine + O2 + H2O = benzaldehyde + H2O2 + NH4(+). The catalysed reaction is dopamine + O2 + H2O = 3,4-dihydroxyphenylacetaldehyde + H2O2 + NH4(+). The enzyme catalyses tyramine + O2 + H2O = (4-hydroxyphenyl)acetaldehyde + H2O2 + NH4(+). It catalyses the reaction (R)-noradrenaline + O2 + H2O = (R)-3,4-dihydroxymandelaldehyde + H2O2 + NH4(+). It carries out the reaction 2-phenylethylamine + O2 + H2O = 2-phenylacetaldehyde + H2O2 + NH4(+). The catalysed reaction is N-acetylputrescine + O2 + H2O = 4-acetamidobutanal + H2O2 + NH4(+). Its function is as follows. Catalyzes the oxidative deamination of primary and some secondary amines such as neurotransmitters, and exogenous amines including the tertiary amine, neurotoxin 1-methyl-4-phenyl-1,2,3,6-tetrahydropyridine (MPTP), with concomitant reduction of oxygen to hydrogen peroxide and participates in the metabolism of neuroactive and vasoactive amines in the central nervous system and peripheral tissues. Preferentially degrades benzylamine and phenylethylamine. This is Amine oxidase [flavin-containing] B from Canis lupus familiaris (Dog).